A 470-amino-acid chain; its full sequence is Cannabinoid receptor 1 (470 aa).

Topologically, residues 1-121 (MKSILDGLAD…TPSQQLVIAA (121 aa)) are extracellular. A required for mitochondrial localization region spans residues 2 to 23 (KSILDGLADTTFRTITTDLLYL). N-linked (GlcNAc...) asparagine glycosylation is found at Asn78 and Asn84. The helical transmembrane segment at 122 to 142 (LSIILGTFTVLENMLVLVVIV) threads the bilayer. Residues 143 to 154 (QSRSLRCRPSYH) are Cytoplasmic-facing. A helical transmembrane segment spans residues 155-175 (FIGSLAVADLLGSVIFVYSFV). Residues 176 to 187 (DFHVFHRKDSPN) are Extracellular-facing. The chain crosses the membrane as a helical span at residues 188–208 (VFLFKLGGVTASFTASVGSLF). Residues 209-232 (LTAIDRYISIHRPMSYKRIVTRTK) are Cytoplasmic-facing. The chain crosses the membrane as a helical span at residues 233-253 (AVIAFCMMWTIAIVIAVLPLF). Residues 254 to 277 (GWNCIKLRSVCSDIFPLIDETYLM) are Extracellular-facing. Residues 278 to 298 (FWIGVTSVLLLFIVYAYMYIL) traverse the membrane as a helical segment. Residues 299–344 (WKAHNHAVRMLQRGTQKSIIVHTSEDGKVHITRPDQTRMDIRLAKT) lie on the Cytoplasmic side of the membrane. A helical membrane pass occupies residues 345 to 365 (LVLILVVLIICWGPLMAIMVY). Residues 366–377 (DVFGKINKTIKT) are Extracellular-facing. Asn372 carries an N-linked (GlcNAc...) asparagine glycan. The helical transmembrane segment at 378 to 398 (VFAFCSVLCLLNSTVNPIIYA) threads the bilayer. The Cytoplasmic segment spans residues 399–470 (LRSKDLRNAF…VSTDTSAEAV (72 aa)). Cys415 is lipidated: S-palmitoyl cysteine.

It belongs to the G-protein coupled receptor 1 family. In terms of processing, palmitoylation at Cys-415 is important for recruitment at both plasma membrane and lipid rafts and association with G protein alpha subunits. As to expression, expressed in neurons, especially in the olfactory bulbs, telencephalic pallium, and hypothalamus and also in the midbrain and hindbrain (in the mesencephalic tegmentum and dorsolateral rhombencephalon). Expressed also in the spinal cord.

Its subcellular location is the cell membrane. The protein localises to the mitochondrion outer membrane. It is found in the cell projection. It localises to the axon. The protein resides in the presynapse. Its function is as follows. G-protein coupled receptor for cannabinoids. Mediates many cannabinoid-induced effects in the central nervous system (CNS), as well as in peripheral tissues. Regulates cellular respiration and energy production in response to cannabinoids. Signaling typically involves reduction in cyclic AMP. The polypeptide is Cannabinoid receptor 1 (cnr1) (Xenopus laevis (African clawed frog)).